The primary structure comprises 698 residues: Inner centromere protein SLI15 (698 aa).

Ser268 carries the phosphoserine modification. Disordered regions lie at residues 365–390 (KNKI…FDKT), 405–444 (EQKK…EVKN), and 455–474 (RPTK…TSQT). 2 stretches are compositionally biased toward polar residues: residues 422–439 (RPHS…SSPS) and 459–474 (ASIS…TSQT). The residue at position 489 (Ser489) is a Phosphoserine. A disordered region spans residues 535 to 560 (IMRSQQEHHRRKQEKQKRMSHLEQDL). A compositionally biased stretch (basic and acidic residues) spans 550 to 560 (QKRMSHLEQDL).

It belongs to the INCENP family. Component of the CPC complex at least composed of IPL1, BIR1 and SLI15. Phosphorylated by serine/threonine protein kinase IPL1.

Its subcellular location is the nucleus. It localises to the cytoplasm. It is found in the cytoskeleton. The protein localises to the spindle. The protein resides in the chromosome. Its subcellular location is the centromere. It localises to the kinetochore. Component of the chromosomal passenger complex (CPC), a complex that acts as a key regulator of mitosis. Stimulates IPL1 kinase activity and facilitates its association with the mitotic spindle. Has a role in attaching the kinetochores to the microtubules and ensuring that sister kinetochores connect to opposite poles. In Saccharomyces cerevisiae (strain ATCC 204508 / S288c) (Baker's yeast), this protein is Inner centromere protein SLI15 (SLI15).